A 313-amino-acid polypeptide reads, in one-letter code: 4-hydroxy-3-methylbut-2-enyl diphosphate reductase (313 aa).

[4Fe-4S] cluster is bound at residue Cys13. His41 and His75 together coordinate (2E)-4-hydroxy-3-methylbut-2-enyl diphosphate. His41 and His75 together coordinate dimethylallyl diphosphate. 2 residues coordinate isopentenyl diphosphate: His41 and His75. Cys97 lines the [4Fe-4S] cluster pocket. His125 contributes to the (2E)-4-hydroxy-3-methylbut-2-enyl diphosphate binding site. Dimethylallyl diphosphate is bound at residue His125. His125 provides a ligand contact to isopentenyl diphosphate. The active-site Proton donor is Glu127. Thr168 lines the (2E)-4-hydroxy-3-methylbut-2-enyl diphosphate pocket. Cys218 serves as a coordination point for [4Fe-4S] cluster. Residues Ser246, Ser247, Asn248, and Ser295 each coordinate (2E)-4-hydroxy-3-methylbut-2-enyl diphosphate. Dimethylallyl diphosphate is bound by residues Ser246, Ser247, Asn248, and Ser295. Residues Ser246, Ser247, Asn248, and Ser295 each coordinate isopentenyl diphosphate.

This sequence belongs to the IspH family. [4Fe-4S] cluster serves as cofactor.

The enzyme catalyses isopentenyl diphosphate + 2 oxidized [2Fe-2S]-[ferredoxin] + H2O = (2E)-4-hydroxy-3-methylbut-2-enyl diphosphate + 2 reduced [2Fe-2S]-[ferredoxin] + 2 H(+). It carries out the reaction dimethylallyl diphosphate + 2 oxidized [2Fe-2S]-[ferredoxin] + H2O = (2E)-4-hydroxy-3-methylbut-2-enyl diphosphate + 2 reduced [2Fe-2S]-[ferredoxin] + 2 H(+). Its pathway is isoprenoid biosynthesis; dimethylallyl diphosphate biosynthesis; dimethylallyl diphosphate from (2E)-4-hydroxy-3-methylbutenyl diphosphate: step 1/1. It functions in the pathway isoprenoid biosynthesis; isopentenyl diphosphate biosynthesis via DXP pathway; isopentenyl diphosphate from 1-deoxy-D-xylulose 5-phosphate: step 6/6. Catalyzes the conversion of 1-hydroxy-2-methyl-2-(E)-butenyl 4-diphosphate (HMBPP) into a mixture of isopentenyl diphosphate (IPP) and dimethylallyl diphosphate (DMAPP). Acts in the terminal step of the DOXP/MEP pathway for isoprenoid precursor biosynthesis. In Chlorobium phaeovibrioides (strain DSM 265 / 1930) (Prosthecochloris vibrioformis (strain DSM 265)), this protein is 4-hydroxy-3-methylbut-2-enyl diphosphate reductase.